Reading from the N-terminus, the 159-residue chain is Neuroglobin (159 aa).

The Globin domain maps to 3–151 (KLSEKDKELI…VVAAMSQGWA (149 aa)). Heme b contacts are provided by H66 and H98.

The protein belongs to the globin family. Monomer. Homodimers and homotetramers. Mainly monomeric but also detected as part of homodimers and homotetramers.

Its subcellular location is the cytoplasm. The protein localises to the cytosol. It is found in the mitochondrion matrix. It catalyses the reaction Fe(III)-heme b-[protein] + nitric oxide + H2O = Fe(II)-heme b-[protein] + nitrite + 2 H(+). In terms of biological role, monomeric globin with a bis-histidyl six-coordinate heme-iron atom through which it can bind dioxygen, carbon monoxide and nitric oxide. Could help transport oxygen and increase its availability to the metabolically active neuronal tissues, though its low quantity in tissues as well as its high affinity for dioxygen, which may limit its oxygen-releasing ability, argue against it. The ferrous/deoxygenated form exhibits a nitrite reductase activity and it could produce nitric oxide which in turn inhibits cellular respiration in response to hypoxia. In its ferrous/deoxygenated state, it may also exhibit GDI (Guanine nucleotide Dissociation Inhibitor) activity toward heterotrimeric G-alpha proteins, thereby regulating signal transduction to facilitate neuroprotective responses in the wake of hypoxia and associated oxidative stress. In Chaenocephalus aceratus (Blackfin icefish), this protein is Neuroglobin (ngb).